A 340-amino-acid polypeptide reads, in one-letter code: Anthranilate phosphoribosyltransferase (340 aa).

5-phospho-alpha-D-ribose 1-diphosphate is bound by residues Gly80, 83-84 (GD), Thr88, 90-93 (NIST), 108-116 (KHGNRAMSS), and Ser120. Position 80 (Gly80) interacts with anthranilate. Ser92 serves as a coordination point for Mg(2+). Asn111 is a binding site for anthranilate. An anthranilate-binding site is contributed by Arg166. 2 residues coordinate Mg(2+): Asp225 and Glu226.

The protein belongs to the anthranilate phosphoribosyltransferase family. Homodimer. It depends on Mg(2+) as a cofactor.

It catalyses the reaction N-(5-phospho-beta-D-ribosyl)anthranilate + diphosphate = 5-phospho-alpha-D-ribose 1-diphosphate + anthranilate. The protein operates within amino-acid biosynthesis; L-tryptophan biosynthesis; L-tryptophan from chorismate: step 2/5. Catalyzes the transfer of the phosphoribosyl group of 5-phosphorylribose-1-pyrophosphate (PRPP) to anthranilate to yield N-(5'-phosphoribosyl)-anthranilate (PRA). In Roseiflexus castenholzii (strain DSM 13941 / HLO8), this protein is Anthranilate phosphoribosyltransferase.